Reading from the N-terminus, the 303-residue chain is N-acetyl-D-glucosamine kinase (303 aa).

ATP-binding positions include 4-11 (GFDIGGTK) and 133-140 (GVGGGLVL). Zn(2+) is bound by residues H157, C177, C179, and C184.

Belongs to the ROK (NagC/XylR) family. NagK subfamily.

It carries out the reaction N-acetyl-D-glucosamine + ATP = N-acetyl-D-glucosamine 6-phosphate + ADP + H(+). It participates in cell wall biogenesis; peptidoglycan recycling. Its function is as follows. Catalyzes the phosphorylation of N-acetyl-D-glucosamine (GlcNAc) derived from cell-wall degradation, yielding GlcNAc-6-P. In Salmonella choleraesuis (strain SC-B67), this protein is N-acetyl-D-glucosamine kinase.